A 273-amino-acid chain; its full sequence is MDRYLVFGHPVRHSKSPFIHTLFARQTQQELEYGLAEPAVDEFATTLRAFFAQGGKGCNVTVPFKEQAFALVDSLSPRAKRAGAVNTIKLTDDGVLLGDNTDGAGLVADLKSHGVALAGSRILLLGAGGAARGALAPLLAEHPTELVIANRTHAKAQQLAAEFHDLGVVTALTYEQLGGTFDLIINSTSASLQGELPPLSPALIHADIAIYDMMYGSMDTPFISWAKQYGARQAMDGLGMLVEQAAEAFTVWRGIRPGTKQVLRELKRNLGTL.

Residues 14 to 16 (SKS) and threonine 61 each bind shikimate. Lysine 65 functions as the Proton acceptor in the catalytic mechanism. Positions 86 and 102 each coordinate shikimate. NADP(+) is bound by residues 126–130 (GAGGA), 150–155 (NRTHAK), and methionine 213. Residue tyrosine 215 participates in shikimate binding. Glycine 237 serves as a coordination point for NADP(+).

Belongs to the shikimate dehydrogenase family. In terms of assembly, homodimer.

The enzyme catalyses shikimate + NADP(+) = 3-dehydroshikimate + NADPH + H(+). It participates in metabolic intermediate biosynthesis; chorismate biosynthesis; chorismate from D-erythrose 4-phosphate and phosphoenolpyruvate: step 4/7. Functionally, involved in the biosynthesis of the chorismate, which leads to the biosynthesis of aromatic amino acids. Catalyzes the reversible NADPH linked reduction of 3-dehydroshikimate (DHSA) to yield shikimate (SA). This chain is Shikimate dehydrogenase (NADP(+)), found in Aeromonas salmonicida (strain A449).